The following is a 389-amino-acid chain: S-adenosylmethionine synthase (389 aa).

H16 is a binding site for ATP. D18 is a binding site for Mg(2+). E44 contributes to the K(+) binding site. L-methionine contacts are provided by E57 and Q101. The interval 101-111 is flexible loop; it reads QSVDIAQGVNE. ATP-binding positions include 168–170, 234–235, D243, 249–250, A266, and K270; these read DAK, RF, and RK. Position 243 (D243) interacts with L-methionine. K274 lines the L-methionine pocket.

This sequence belongs to the AdoMet synthase family. As to quaternary structure, homotetramer; dimer of dimers. It depends on Mg(2+) as a cofactor. K(+) is required as a cofactor.

The protein resides in the cytoplasm. It carries out the reaction L-methionine + ATP + H2O = S-adenosyl-L-methionine + phosphate + diphosphate. The protein operates within amino-acid biosynthesis; S-adenosyl-L-methionine biosynthesis; S-adenosyl-L-methionine from L-methionine: step 1/1. Its function is as follows. Catalyzes the formation of S-adenosylmethionine (AdoMet) from methionine and ATP. The overall synthetic reaction is composed of two sequential steps, AdoMet formation and the subsequent tripolyphosphate hydrolysis which occurs prior to release of AdoMet from the enzyme. This chain is S-adenosylmethionine synthase, found in Magnetococcus marinus (strain ATCC BAA-1437 / JCM 17883 / MC-1).